The following is a 122-amino-acid chain: Large ribosomal subunit protein bL17 (122 aa).

This sequence belongs to the bacterial ribosomal protein bL17 family. As to quaternary structure, part of the 50S ribosomal subunit. Contacts protein L32.

This chain is Large ribosomal subunit protein bL17, found in Neisseria gonorrhoeae (strain ATCC 700825 / FA 1090).